The following is a 514-amino-acid chain: Xylose import ATP-binding protein XylG (514 aa).

ABC transporter domains lie at 7-246 and 263-508; these read FEMR…VGRE and LEAR…IHAE. 39–46 is an ATP binding site; it reads GENGAGKS.

This sequence belongs to the ABC transporter superfamily. Xylose importer (TC 3.A.1.2.4) family. The complex is composed of two ATP-binding proteins (XylG), two transmembrane proteins (XylH) and a solute-binding protein (XylF).

It is found in the cell inner membrane. The enzyme catalyses D-xylose(out) + ATP + H2O = D-xylose(in) + ADP + phosphate + H(+). Part of the ABC transporter complex XylFGH involved in xylose import. Responsible for energy coupling to the transport system. This chain is Xylose import ATP-binding protein XylG, found in Ralstonia nicotianae (strain ATCC BAA-1114 / GMI1000) (Ralstonia solanacearum).